The following is a 906-amino-acid chain: Protein translocase subunit SecA (906 aa).

ATP is bound by residues Gln-86, Gly-104–Thr-108, and Asp-511. Composition is skewed to basic and acidic residues over residues His-853–Glu-865 and Val-877–Asp-888. Positions His-853–Glu-906 are disordered. Residues Cys-890, Cys-892, Cys-901, and His-902 each coordinate Zn(2+). Over residues Lys-896 to Glu-906 the composition is skewed to basic residues.

This sequence belongs to the SecA family. In terms of assembly, monomer and homodimer. Part of the essential Sec protein translocation apparatus which comprises SecA, SecYEG and auxiliary proteins SecDF-YajC and YidC. Zn(2+) serves as cofactor.

It localises to the cell inner membrane. It is found in the cytoplasm. It carries out the reaction ATP + H2O + cellular proteinSide 1 = ADP + phosphate + cellular proteinSide 2.. Functionally, part of the Sec protein translocase complex. Interacts with the SecYEG preprotein conducting channel. Has a central role in coupling the hydrolysis of ATP to the transfer of proteins into and across the cell membrane, serving both as a receptor for the preprotein-SecB complex and as an ATP-driven molecular motor driving the stepwise translocation of polypeptide chains across the membrane. The polypeptide is Protein translocase subunit SecA (Francisella tularensis subsp. holarctica (strain OSU18)).